A 1105-amino-acid chain; its full sequence is ATP-dependent DNA helicase MPH1 (1105 aa).

The 168-residue stretch at 94–261 (IVQRAFYDNL…EIIDNLSISK (168 aa)) folds into the Helicase ATP-binding domain. 107–114 (LPTGLGKT) serves as a coordination point for ATP. Positions 209-212 (DEAH) match the DEAH box motif. The 174-residue stretch at 468-641 (SIERIGSNLR…LITLAQSNRI (174 aa)) folds into the Helicase C-terminal domain. Disordered regions lie at residues 493-534 (EEAY…AQIK), 684-708 (KGKK…EKRF), 758-824 (IQSK…PKLG), 850-880 (LVTG…ECAP), and 918-953 (VSDD…FDEG). Residues 499–511 (KGKKGRTKGKATK) show a composition bias toward basic residues. Basic and acidic residues predominate over residues 518 to 532 (TPERSTSRTSSEDAQ). Positions 684–705 (KGKKVTKSKSKSKSNSKSKKIE) are enriched in basic residues. The span at 764 to 787 (PVKENQSKRPNSEHICEEDSRQET) shows a compositional bias: basic and acidic residues. Over residues 788-799 (ENNSNESNGSFE) the composition is skewed to low complexity. Residues 927 to 943 (DSINNQQLHKNKNLGST) are compositionally biased toward polar residues. Over residues 944–953 (SDDDDAFDEG) the composition is skewed to acidic residues.

The protein belongs to the DEAD box helicase family. DEAH subfamily. FANCM sub-subfamily. As to quaternary structure, interacts with the MHF histone-fold complex to form the FANCM-MHF complex.

It is found in the nucleus. It carries out the reaction ATP + H2O = ADP + phosphate + H(+). Functionally, ATP-dependent DNA helicase involved in DNA damage repair by homologous recombination and in genome maintenance. Capable of unwinding D-loops. Plays a role in limiting crossover recombinants during mitotic DNA double-strand break (DSB) repair. Component of a FANCM-MHF complex which promotes gene conversion at blocked replication forks, probably by reversal of the stalled fork. This Debaryomyces hansenii (strain ATCC 36239 / CBS 767 / BCRC 21394 / JCM 1990 / NBRC 0083 / IGC 2968) (Yeast) protein is ATP-dependent DNA helicase MPH1.